A 208-amino-acid polypeptide reads, in one-letter code: Small ribosomal subunit protein uS2 (208 aa).

The protein belongs to the universal ribosomal protein uS2 family.

In Cenarchaeum symbiosum (strain A), this protein is Small ribosomal subunit protein uS2.